The sequence spans 292 residues: NAD kinase (292 aa).

D73 (proton acceptor) is an active-site residue. NAD(+) is bound by residues 73-74, 147-148, H158, R175, D177, 188-193, and Q247; these read DG, NE, and TAYSLS.

This sequence belongs to the NAD kinase family. The cofactor is a divalent metal cation.

It is found in the cytoplasm. It catalyses the reaction NAD(+) + ATP = ADP + NADP(+) + H(+). Its function is as follows. Involved in the regulation of the intracellular balance of NAD and NADP, and is a key enzyme in the biosynthesis of NADP. Catalyzes specifically the phosphorylation on 2'-hydroxyl of the adenosine moiety of NAD to yield NADP. The protein is NAD kinase of Escherichia coli (strain SMS-3-5 / SECEC).